A 427-amino-acid chain; its full sequence is Adenylosuccinate synthetase (427 aa).

Residues 12–18 (GDEGKGK) and 40–42 (GHT) contribute to the GTP site. Asp13 (proton acceptor) is an active-site residue. Asp13 and Gly40 together coordinate Mg(2+). Residues 13–16 (DEGK), 38–41 (NAGH), Thr126, Arg140, Gln221, Thr236, and Arg299 contribute to the IMP site. The active-site Proton donor is the His41. 295 to 301 (STTNRPR) lines the substrate pocket. GTP contacts are provided by residues Arg301, 327 to 329 (KLD), and 409 to 411 (SLG).

This sequence belongs to the adenylosuccinate synthetase family. In terms of assembly, homodimer. Mg(2+) serves as cofactor.

It localises to the cytoplasm. It carries out the reaction IMP + L-aspartate + GTP = N(6)-(1,2-dicarboxyethyl)-AMP + GDP + phosphate + 2 H(+). It functions in the pathway purine metabolism; AMP biosynthesis via de novo pathway; AMP from IMP: step 1/2. Plays an important role in the de novo pathway of purine nucleotide biosynthesis. Catalyzes the first committed step in the biosynthesis of AMP from IMP. This Borrelia turicatae (strain 91E135) protein is Adenylosuccinate synthetase.